The following is a 592-amino-acid chain: Frizzled-1 (592 aa).

Residues 1-26 (MAERRGPAGGGSGEVGGGRRAGGDRC) form a disordered region. A signal peptide spans 1–48 (MAERRGPAGGGSGEVGGGRRAGGDRCPRRPPALPLLLLLWAAALPAGG). Residues 7–20 (PAGGGSGEVGGGRR) show a composition bias toward gly residues. Residues 49–271 (QPAAQPAALS…PEELRFSRTW (223 aa)) are Extracellular-facing. The FZ domain occupies 65 to 184 (PDHGYCQPIS…HGAGELCVGQ (120 aa)). 5 disulfides stabilise this stretch: Cys-70-Cys-131, Cys-78-Cys-124, Cys-115-Cys-152, Cys-141-Cys-181, and Cys-145-Cys-169. Asn-84 is a glycosylation site (N-linked (GlcNAc...) asparagine). A glycan (N-linked (GlcNAc...) asparagine) is linked at Asn-185. The disordered stretch occupies residues 185 to 219 (NASERGTPTPALRPESWTSNPHRGGGAGGSGPGEA). Positions 207–218 (RGGGAGGSGPGE) are enriched in gly residues. The chain crosses the membrane as a helical span at residues 272–292 (IGIWSVLCCASTLFTVLTYLV). The Cytoplasmic portion of the chain corresponds to 293 to 303 (DMKRFSYPERP). A helical membrane pass occupies residues 304 to 324 (IIFLSGCYTAVAVAYIAGFLL). Residues 325–351 (EERVVCNERFAEDGSRTVAQGTKREGC) lie on the Extracellular side of the membrane. The chain crosses the membrane as a helical span at residues 352–372 (TILFMMLYFFGMASSIWWVIL). Residues 373–394 (SLTWFLAAGMKWGHEAIEANSQ) are Cytoplasmic-facing. The chain crosses the membrane as a helical span at residues 395–415 (YFHLAAWAVPAIKTITILALG). Topologically, residues 416-438 (QVDGDVLSGVCFVGINNVDALRG) are extracellular. The chain crosses the membrane as a helical span at residues 439–459 (FVLAPLFVYLFIGTSFLLAGF). The Cytoplasmic portion of the chain corresponds to 460-485 (VSLFRIRTIMKHDGTKTEKLEKLMVR). Residues 486-506 (IGIFSVLYTVPATIVIACYFY) traverse the membrane as a helical segment. Topologically, residues 507 to 546 (EQAFREQWERSWVTQSCKSYAIPCPNNHSSHHPPMSPDFT) are extracellular. The N-linked (GlcNAc...) asparagine glycan is linked to Asn-533. A helical transmembrane segment spans residues 547–567 (VFMIKYLMTLIVGITSGFWIW). Residues 568-592 (SGKTLNSWRKFYTRLTNSKQGETTV) lie on the Cytoplasmic side of the membrane. The short motif at 570–575 (KTLNSW) is the Lys-Thr-X-X-X-Trp motif, mediates interaction with the PDZ domain of Dvl family members element. The short motif at 590–592 (TTV) is the PDZ-binding element.

This sequence belongs to the G-protein coupled receptor Fz/Smo family. Expressed in the lens, otic placode (medial wall of the vesicle) and in epibranchial placode. Also expressed in the developing somites (dermomyotome).

It is found in the cell membrane. In terms of biological role, receptor for Wnt proteins. Functions in the canonical Wnt/beta-catenin signaling pathway. The canonical Wnt/beta-catenin signaling pathway leads to the activation of disheveled proteins, inhibition of GSK-3 kinase, nuclear accumulation of beta-catenin and activation of Wnt target genes. A second signaling pathway involving PKC and calcium fluxes has been seen for some family members, but it is not yet clear if it represents a distinct pathway or if it can be integrated in the canonical pathway, as PKC seems to be required for Wnt-mediated inactivation of GSK-3 kinase. Both pathways seem to involve interactions with G-proteins. May be involved in transduction and intercellular transmission of polarity information during tissue morphogenesis and/or in differentiated tissues. This is Frizzled-1 (FZD1) from Gallus gallus (Chicken).